The following is a 1040-amino-acid chain: Multidrug resistance protein MdtB (1040 aa).

12 consecutive transmembrane segments (helical) span residues F16 to I36, D342 to L362, I369 to L389, L396 to I416, I440 to F460, F472 to P492, W537 to I557, L869 to I889, H890 to M910, L911 to V931, I968 to V988, and I998 to I1018.

This sequence belongs to the resistance-nodulation-cell division (RND) (TC 2.A.6) family. MdtB subfamily. As to quaternary structure, part of a tripartite efflux system composed of MdtA, MdtB and MdtC. MdtB forms a heteromultimer with MdtC.

It localises to the cell inner membrane. This chain is Multidrug resistance protein MdtB, found in Enterobacter sp. (strain 638).